Here is a 381-residue protein sequence, read N- to C-terminus: MAKKDYYEVLGLQKGASEDDIKRAYKRLASKHHPDKNQGSKEAEEKFKEINEAYEVLGDDQKRAAYDQYGHAAFEQGGGTGGFGGGFGGADFGDMFGDIFGDIFGGGRGRQRVVRGEDLRYDLEISLEEAVKGTTKDIQINTLAHCDSCGGSGAEKGSKVETCPHCHGSGRIRRQQGFFVSESICPTCHGSGKKIEKPCRSCHGEGRVHKKENLSVKIPAGVDTGNQLRLAGKGAAGENGAPAGDLYVVIHVREHNIFERDGSNLYCEVPISFATAALGGEIEVPTLDGRVKLKIPAETQTGKLFRMRGKGVASTRSGYAGDLICRIVVETPVNLTSEQKELLHKLEESLQGKDLSKHAPKSSGFLDGVKKFFDNLGKSDK.

The region spanning 5–70 (DYYEVLGLQK…QKRAAYDQYG (66 aa)) is the J domain. A CR-type zinc finger spans residues 133–211 (GTTKDIQINT…CHGEGRVHKK (79 aa)). Zn(2+) is bound by residues Cys-146, Cys-149, Cys-163, Cys-166, Cys-185, Cys-188, Cys-199, and Cys-202. 4 CXXCXGXG motif repeats span residues 146 to 153 (CDSCGGSG), 163 to 170 (CPHCHGSG), 185 to 192 (CPTCHGSG), and 199 to 206 (CRSCHGEG).

It belongs to the DnaJ family. As to quaternary structure, homodimer. The cofactor is Zn(2+).

The protein resides in the cytoplasm. Its function is as follows. Participates actively in the response to hyperosmotic and heat shock by preventing the aggregation of stress-denatured proteins and by disaggregating proteins, also in an autonomous, DnaK-independent fashion. Unfolded proteins bind initially to DnaJ; upon interaction with the DnaJ-bound protein, DnaK hydrolyzes its bound ATP, resulting in the formation of a stable complex. GrpE releases ADP from DnaK; ATP binding to DnaK triggers the release of the substrate protein, thus completing the reaction cycle. Several rounds of ATP-dependent interactions between DnaJ, DnaK and GrpE are required for fully efficient folding. Also involved, together with DnaK and GrpE, in the DNA replication of plasmids through activation of initiation proteins. In Haemophilus influenzae (strain 86-028NP), this protein is Chaperone protein DnaJ.